The following is a 510-amino-acid chain: Maturase K (510 aa).

The protein belongs to the intron maturase 2 family. MatK subfamily.

The protein resides in the plastid. It is found in the chloroplast. In terms of biological role, usually encoded in the trnK tRNA gene intron. Probably assists in splicing its own and other chloroplast group II introns. The protein is Maturase K of Mammillaria haageana (Cactus).